Consider the following 166-residue polypeptide: ATP synthase subunit b 1 (166 aa).

The helical transmembrane segment at 7 to 29 (FWTALAFVLFFVIFGRKLWVAIT) threads the bilayer.

Belongs to the ATPase B chain family. F-type ATPases have 2 components, F(1) - the catalytic core - and F(0) - the membrane proton channel. F(1) has five subunits: alpha(3), beta(3), gamma(1), delta(1), epsilon(1). F(0) has three main subunits: a(1), b(2) and c(10-14). The alpha and beta chains form an alternating ring which encloses part of the gamma chain. F(1) is attached to F(0) by a central stalk formed by the gamma and epsilon chains, while a peripheral stalk is formed by the delta and b chains.

It is found in the cell inner membrane. Functionally, f(1)F(0) ATP synthase produces ATP from ADP in the presence of a proton or sodium gradient. F-type ATPases consist of two structural domains, F(1) containing the extramembraneous catalytic core and F(0) containing the membrane proton channel, linked together by a central stalk and a peripheral stalk. During catalysis, ATP synthesis in the catalytic domain of F(1) is coupled via a rotary mechanism of the central stalk subunits to proton translocation. In terms of biological role, component of the F(0) channel, it forms part of the peripheral stalk, linking F(1) to F(0). In Gluconobacter oxydans (strain 621H) (Gluconobacter suboxydans), this protein is ATP synthase subunit b 1.